The following is an 878-amino-acid chain: Alanine--tRNA ligase (878 aa).

Zn(2+) contacts are provided by histidine 564, histidine 568, cysteine 666, and histidine 670.

It belongs to the class-II aminoacyl-tRNA synthetase family. In terms of assembly, homotetramer. Zn(2+) is required as a cofactor.

The protein localises to the cytoplasm. It catalyses the reaction tRNA(Ala) + L-alanine + ATP = L-alanyl-tRNA(Ala) + AMP + diphosphate. Catalyzes the attachment of alanine to tRNA(Ala) in a two-step reaction: alanine is first activated by ATP to form Ala-AMP and then transferred to the acceptor end of tRNA(Ala). Also edits incorrectly charged Ser-tRNA(Ala) and Gly-tRNA(Ala) via its editing domain. The sequence is that of Alanine--tRNA ligase from Buchnera aphidicola subsp. Acyrthosiphon pisum (strain APS) (Acyrthosiphon pisum symbiotic bacterium).